The following is a 470-amino-acid chain: Cyclic AMP receptor-like protein D (470 aa).

Topologically, residues 1–16 (MSSCSSLSMDDRVKIG) are extracellular. A helical membrane pass occupies residues 17-37 (YGSIAGASLSIIGSIGTIILI). Residues 38–123 (KIRNKKQEKK…NNNQKTKVSH (86 aa)) lie on the Cytoplasmic side of the membrane. Residues 124–144 (FIINLSIANLLASIFMITIKL) form a helical membrane-spanning segment. Residues 145–176 (MMIHFNDKFIKVLPSTANHSFNALISVCTIGN) are Extracellular-facing. Asn-162 is a glycosylation site (N-linked (GlcNAc...) asparagine). Cys-172 and Cys-287 form a disulfide bridge. The chain crosses the membrane as a helical span at residues 177-197 (GVIGFSFISTFFWTLAISMYI). Over 198–253 (YQQFLSSSTINSNNNNNNINNINNNNNNNINNINNSKNNNSINNFNNSNKSNKIIK) the chain is Cytoplasmic. A helical membrane pass occupies residues 254–274 (MLFYFVCWVIPFVLGSILVSG). Over 275 to 295 (SRLIELNSDLPWCSIDSNIQL) the chain is Extracellular. A helical membrane pass occupies residues 296 to 316 (ISFYFPLIICLLATTFFTILI). Residues 317 to 342 (KYKFSNDKLACSSSSLINLQSKIIQR) are Cytoplasmic-facing. Residues 343 to 363 (LILFLIVILVCWVPSLISFFI) traverse the membrane as a helical segment. The Extracellular segment spans residues 364 to 372 (SFFSKNCKQ). Residues 373–393 (FLWLEIISSTIQSCQGILNFL) form a helical membrane-spanning segment. Residues 394 to 470 (SYLSIFKKLK…DFDNNQIQEK (77 aa)) lie on the Cytoplasmic side of the membrane.

It belongs to the G-protein coupled receptor 5 family.

The protein resides in the membrane. Receptor for cAMP. This chain is Cyclic AMP receptor-like protein D (crlD), found in Dictyostelium discoideum (Social amoeba).